Consider the following 358-residue polypeptide: Purine permease 2 (358 aa).

The next 10 helical transmembrane spans lie at 6-26 (VLVI…PLMM), 37-57 (IWFP…PLLL), 74-94 (FFLM…LVGF), 110-130 (TASL…FFMV), 134-154 (FTPF…VLAL), 170-190 (VVGF…LPLV), 209-229 (FQMV…LAAG), 262-282 (VIVF…GLIF), 288-308 (VSGI…VICF), and 312-332 (FQAG…SYFY). One can recognise an EamA domain in the interval 46–154 (VGCPLIFFPL…LTGGAVVLAL (109 aa)).

Belongs to the purine permeases (TC 2.A.7.14) family. In terms of tissue distribution, expressed in the vascular system of leaves. Restricted to the phloem. Expressed in flowers and roots and not detected in stems.

It is found in the membrane. Competitive inhibition of adenine transport by isopentenyladenine, kinetin, benzylaminopurine, trans- and cis-zeatin and trans-zeatin riboside. Functionally, mediates adenine transport. May be involved in the uptake of cytokinin analogs. The chain is Purine permease 2 (PUP2) from Arabidopsis thaliana (Mouse-ear cress).